The primary structure comprises 366 residues: 3-dehydroquinate synthase (366 aa).

Residues 107-111 (GVIGD), 131-132 (TT), lysine 144, and lysine 153 each bind NAD(+). Residues glutamate 186, histidine 251, and histidine 268 each coordinate Zn(2+).

This sequence belongs to the sugar phosphate cyclases superfamily. Dehydroquinate synthase family. Requires Co(2+) as cofactor. Zn(2+) is required as a cofactor. It depends on NAD(+) as a cofactor.

It localises to the cytoplasm. It carries out the reaction 7-phospho-2-dehydro-3-deoxy-D-arabino-heptonate = 3-dehydroquinate + phosphate. It functions in the pathway metabolic intermediate biosynthesis; chorismate biosynthesis; chorismate from D-erythrose 4-phosphate and phosphoenolpyruvate: step 2/7. Functionally, catalyzes the conversion of 3-deoxy-D-arabino-heptulosonate 7-phosphate (DAHP) to dehydroquinate (DHQ). The polypeptide is 3-dehydroquinate synthase (Microcystis aeruginosa (strain NIES-843 / IAM M-2473)).